We begin with the raw amino-acid sequence, 546 residues long: Glucose-6-phosphate isomerase (546 aa).

Glu-353 (proton donor) is an active-site residue. Catalysis depends on residues His-384 and Lys-512.

This sequence belongs to the GPI family.

It is found in the cytoplasm. The enzyme catalyses alpha-D-glucose 6-phosphate = beta-D-fructose 6-phosphate. It participates in carbohydrate biosynthesis; gluconeogenesis. Its pathway is carbohydrate degradation; glycolysis; D-glyceraldehyde 3-phosphate and glycerone phosphate from D-glucose: step 2/4. Its function is as follows. Catalyzes the reversible isomerization of glucose-6-phosphate to fructose-6-phosphate. This is Glucose-6-phosphate isomerase from Actinobacillus pleuropneumoniae serotype 3 (strain JL03).